The chain runs to 315 residues: Long form salivary protein D7L2 (315 aa).

A signal peptide spans 1–18; sequence MIVAPVVLSIFLQLFVQA. Disulfide bonds link Cys-37–Cys-73, Cys-69–Cys-128, Cys-178–Cys-211, and Cys-252–Cys-263.

This sequence belongs to the PBP/GOBP family. In terms of assembly, interacts with host coagulation factor XII/F12 (inactive and activated). Interacts with host coagulation factor XI/F11 (inactive).

It is found in the secreted. Functionally, modulates blood feeding of female mosquitoes on vertebrate species by binding and sequestering different mediators involved in the host response. Binds leukotriene B4 and leukotriene D4. Exhibits anticoagulant activity targeting the intrinsic coagulation pathway; binds coagulation factors XII and XI, preventing generation of activated FXIIa and FXIa. The chain is Long form salivary protein D7L2 from Anopheles gambiae (African malaria mosquito).